We begin with the raw amino-acid sequence, 633 residues long: DNA mismatch repair protein MutL (633 aa).

2 disordered regions span residues 337 to 364 (RPDD…GEFG) and 383 to 405 (VGWS…TRPE). The span at 385–396 (WSGGSSASGGSS) shows a compositional bias: gly residues.

The protein belongs to the DNA mismatch repair MutL/HexB family.

This protein is involved in the repair of mismatches in DNA. It is required for dam-dependent methyl-directed DNA mismatch repair. May act as a 'molecular matchmaker', a protein that promotes the formation of a stable complex between two or more DNA-binding proteins in an ATP-dependent manner without itself being part of a final effector complex. The chain is DNA mismatch repair protein MutL from Pseudomonas aeruginosa (strain LESB58).